Here is a 210-residue protein sequence, read N- to C-terminus: MSRHPEVKWAQRIDKVYITVQLADAKDAKVNLEPEGVFSFSATAGTDGNLYESKLELNDKVNVEESKISVGVRSIFCIVEKAEAKWWKKLVRDDQKAPHFVKVDWDKWVDEDDDGADVNVDGMDFSNFGGMGGMGGMGGMGDMMGGMGGMGGMGGMAEMMGGMGGMGGMGGMDEFEDESDDEEEVSKPQDAEKAAEAGKSQESDAKTETS.

In terms of domain architecture, CS spans 2–91; that stretch reads SRHPEVKWAQ…AEAKWWKKLV (90 aa). The interval 165–210 is disordered; the sequence is GMGGMGGMDEFEDESDDEEEVSKPQDAEKAAEAGKSQESDAKTETS. The segment covering 173-184 has biased composition (acidic residues); that stretch reads DEFEDESDDEEE. The segment covering 185–210 has biased composition (basic and acidic residues); the sequence is VSKPQDAEKAAEAGKSQESDAKTETS.

This is an uncharacterized protein from Oryza sativa subsp. indica (Rice).